A 190-amino-acid polypeptide reads, in one-letter code: T-cell receptor gamma chain C region 5/10-13 (190 aa).

A c region region spans residues 1–157; the sequence is DKRTDSDFSP…LQVTTTYAFY (157 aa). The helical transmembrane segment at 158-178 threads the bilayer; it reads TYLILFFKSMVHLAFVVFCLF. Residues 179-190 lie on the Cytoplasmic side of the membrane; that stretch reads RRAAMSCDDQRS.

The protein resides in the membrane. The chain is T-cell receptor gamma chain C region 5/10-13 from Mus musculus (Mouse).